A 436-amino-acid polypeptide reads, in one-letter code: Trigger factor (436 aa).

The 86-residue stretch at Glu-161–Pro-246 folds into the PPIase FKBP-type domain.

Belongs to the FKBP-type PPIase family. Tig subfamily.

Its subcellular location is the cytoplasm. The enzyme catalyses [protein]-peptidylproline (omega=180) = [protein]-peptidylproline (omega=0). Involved in protein export. Acts as a chaperone by maintaining the newly synthesized protein in an open conformation. Functions as a peptidyl-prolyl cis-trans isomerase. In Pseudomonas savastanoi pv. phaseolicola (strain 1448A / Race 6) (Pseudomonas syringae pv. phaseolicola (strain 1448A / Race 6)), this protein is Trigger factor.